The primary structure comprises 337 residues: Nucleoid-associated protein PBPRA2585 (337 aa).

The protein belongs to the YejK family.

The protein resides in the cytoplasm. It localises to the nucleoid. This chain is Nucleoid-associated protein PBPRA2585, found in Photobacterium profundum (strain SS9).